Here is a 506-residue protein sequence, read N- to C-terminus: Galactose/methyl galactoside import ATP-binding protein MglA (506 aa).

ABC transporter domains lie at 14–249 (LEMR…VGRS) and 259–506 (NKPG…SLHL). An ATP-binding site is contributed by 46 to 53 (GENGAGKS).

It belongs to the ABC transporter superfamily. Galactose/methyl galactoside importer (TC 3.A.1.2.3) family. The complex is composed of one ATP-binding protein (MglA), two transmembrane proteins (MglC) and a solute-binding protein (MglB).

The protein resides in the cell inner membrane. The enzyme catalyses D-galactose(out) + ATP + H2O = D-galactose(in) + ADP + phosphate + H(+). The catalysed reaction is methyl beta-D-galactoside(out) + ATP + H2O = methyl beta-D-galactoside(in) + ADP + phosphate + H(+). With respect to regulation, stimulated 3-fold by galactose and inhibited by vanadate, N-ethylmaleimide, and 5-methoxyindole-2-carboxylic acid. Its function is as follows. Part of the ABC transporter complex MglABC involved in galactose/methyl galactoside import. Responsible for energy coupling to the transport system. The chain is Galactose/methyl galactoside import ATP-binding protein MglA from Salmonella typhimurium (strain LT2 / SGSC1412 / ATCC 700720).